The chain runs to 239 residues: MNRPSGRAADQLRPIRITRHYTKHAEGSVLVEFGDTKVICTVSAESGVPRFLKGQGQGWLTAEYGMLPRSTGERNQREASRGKQGGRTLEIQRLIGRSLRAALDLSKLGENTLYIDCDVIQADGGTRTASITGATVALIDALAVLKKRGALKGNPLKQMVAAVSVGIYQGVPVLDLDYLEDSAAETDLNVVMTDAGGFIEVQGTAEGAPFRPAELNAMLELAQQGMQELFELQRAALAE.

Residues Arg87 and 125–127 contribute to the phosphate site; that span reads GTR.

Belongs to the RNase PH family. In terms of assembly, homohexameric ring arranged as a trimer of dimers.

It catalyses the reaction tRNA(n+1) + phosphate = tRNA(n) + a ribonucleoside 5'-diphosphate. Functionally, phosphorolytic 3'-5' exoribonuclease that plays an important role in tRNA 3'-end maturation. Removes nucleotide residues following the 3'-CCA terminus of tRNAs; can also add nucleotides to the ends of RNA molecules by using nucleoside diphosphates as substrates, but this may not be physiologically important. Probably plays a role in initiation of 16S rRNA degradation (leading to ribosome degradation) during starvation. The polypeptide is Ribonuclease PH (Pseudomonas aeruginosa (strain LESB58)).